The primary structure comprises 260 residues: Adenosylcobinamide-GDP ribazoletransferase (260 aa).

8 helical membrane passes run 3 to 23 (APLW…LPAW), 36 to 56 (FAPW…LVLI), 60 to 80 (WPTS…SGGL), 108 to 128 (VGAS…ASLL), 133 to 153 (LAPL…LWAM), 180 to 200 (ALPA…LMIV), 206 to 226 (MVLM…PELL), and 239 to 259 (GASV…LLPA).

The protein belongs to the CobS family. Mg(2+) serves as cofactor.

Its subcellular location is the cell inner membrane. The catalysed reaction is alpha-ribazole + adenosylcob(III)inamide-GDP = adenosylcob(III)alamin + GMP + H(+). It carries out the reaction alpha-ribazole 5'-phosphate + adenosylcob(III)inamide-GDP = adenosylcob(III)alamin 5'-phosphate + GMP + H(+). It functions in the pathway cofactor biosynthesis; adenosylcobalamin biosynthesis; adenosylcobalamin from cob(II)yrinate a,c-diamide: step 7/7. In terms of biological role, joins adenosylcobinamide-GDP and alpha-ribazole to generate adenosylcobalamin (Ado-cobalamin). Also synthesizes adenosylcobalamin 5'-phosphate from adenosylcobinamide-GDP and alpha-ribazole 5'-phosphate. The protein is Adenosylcobinamide-GDP ribazoletransferase of Prochlorococcus marinus (strain MIT 9313).